The sequence spans 200 residues: Small ribosomal subunit protein uS4 (200 aa).

The interval 22–43 (TGKELQKRPYPPGQHGPSQRRK) is disordered. The S4 RNA-binding domain occupies 92-152 (SRLDNLVYRL…EKSRNLQVIK (61 aa)).

The protein belongs to the universal ribosomal protein uS4 family. In terms of assembly, part of the 30S ribosomal subunit. Contacts protein S5. The interaction surface between S4 and S5 is involved in control of translational fidelity.

Functionally, one of the primary rRNA binding proteins, it binds directly to 16S rRNA where it nucleates assembly of the body of the 30S subunit. In terms of biological role, with S5 and S12 plays an important role in translational accuracy. The chain is Small ribosomal subunit protein uS4 from Geobacillus sp. (strain WCH70).